A 355-amino-acid polypeptide reads, in one-letter code: 3-dehydroquinate synthase (355 aa).

NAD(+) is bound by residues 71-76 (EGEASK), 105-109 (GVVGD), 129-130 (TS), K142, K151, and 169-172 (TLNT). Residues E184, H246, and H263 each contribute to the Zn(2+) site.

It belongs to the sugar phosphate cyclases superfamily. Dehydroquinate synthase family. NAD(+) serves as cofactor. It depends on Co(2+) as a cofactor. The cofactor is Zn(2+).

The protein resides in the cytoplasm. The enzyme catalyses 7-phospho-2-dehydro-3-deoxy-D-arabino-heptonate = 3-dehydroquinate + phosphate. It participates in metabolic intermediate biosynthesis; chorismate biosynthesis; chorismate from D-erythrose 4-phosphate and phosphoenolpyruvate: step 2/7. Functionally, catalyzes the conversion of 3-deoxy-D-arabino-heptulosonate 7-phosphate (DAHP) to dehydroquinate (DHQ). This chain is 3-dehydroquinate synthase, found in Streptococcus mutans serotype c (strain ATCC 700610 / UA159).